Reading from the N-terminus, the 340-residue chain is Uroporphyrinogen decarboxylase (340 aa).

Substrate-binding positions include 21 to 25 (RQAGR), Asp71, Tyr148, Ser203, and His316.

It belongs to the uroporphyrinogen decarboxylase family. As to quaternary structure, homodimer.

The protein localises to the cytoplasm. The enzyme catalyses uroporphyrinogen III + 4 H(+) = coproporphyrinogen III + 4 CO2. Its pathway is porphyrin-containing compound metabolism; protoporphyrin-IX biosynthesis; coproporphyrinogen-III from 5-aminolevulinate: step 4/4. Its function is as follows. Catalyzes the decarboxylation of four acetate groups of uroporphyrinogen-III to yield coproporphyrinogen-III. This Campylobacter hominis (strain ATCC BAA-381 / DSM 21671 / CCUG 45161 / LMG 19568 / NCTC 13146 / CH001A) protein is Uroporphyrinogen decarboxylase.